The sequence spans 143 residues: Anti-sigma F factor (143 aa).

Belongs to the anti-sigma-factor family.

It catalyses the reaction L-seryl-[protein] + ATP = O-phospho-L-seryl-[protein] + ADP + H(+). The enzyme catalyses L-threonyl-[protein] + ATP = O-phospho-L-threonyl-[protein] + ADP + H(+). Its function is as follows. Binds to sigma F and blocks its ability to form an RNA polymerase holoenzyme (E-sigma F). Phosphorylates SpoIIAA on a serine residue. This phosphorylation may enable SpoIIAA to act as an anti-anti-sigma factor that counteracts SpoIIAB and thus releases sigma F from inhibition. The sequence is that of Anti-sigma F factor from Clostridium beijerinckii (strain ATCC 51743 / NCIMB 8052) (Clostridium acetobutylicum).